Reading from the N-terminus, the 112-residue chain is uncharacterized protein (112 aa).

The N-terminal 21 residues, 1-21 (MYLSAQLMRTVTASHLTLRAL), are a transit peptide targeting the mitochondrion.

It is found in the mitochondrion. This is an uncharacterized protein from Saccharomyces cerevisiae (strain ATCC 204508 / S288c) (Baker's yeast).